A 515-amino-acid chain; its full sequence is Dimethylnonatriene synthase (515 aa).

A helical transmembrane segment spans residues 3–23 (FLFSTLQLSLFSLALVIFGYI). H219 is a binding site for substrate. Residue K252 forms a Glycyl lysine isopeptide (Lys-Gly) (interchain with G-Cter in ubiquitin) linkage. Residue C452 coordinates heme.

It belongs to the cytochrome P450 family. It depends on heme as a cofactor. As to expression, expressed in stems, flower peduncles, receptacle of developing and mature flowers and in stigma of mature opening flower buds.

The protein localises to the membrane. It catalyses the reaction (3S,6E)-nerolidol + reduced [NADPH--hemoprotein reductase] + O2 = (3E)-4,8-dimethylnona-1,3,7-triene + but-3-en-2-one + oxidized [NADPH--hemoprotein reductase] + 2 H2O + H(+). It carries out the reaction (6E,10E)-geranyllinalool + reduced [NADPH--hemoprotein reductase] + O2 = (3E,7E)-4,8,12-trimethyltrideca 1,3,7,11-tetraene + but-3-en-2-one + oxidized [NADPH--hemoprotein reductase] + 2 H2O + H(+). It participates in secondary metabolite biosynthesis; terpenoid biosynthesis. In terms of biological role, involved in the biosynthesis of homoterpenes, attractants of herbivores parasitoids and predators (e.g. predatory mites and parasitoid wasps). Catalyzes the conversion of the C20 (E,E)-geranyllinalool to C16-homoterpene 4,8,12-trimethyltrideca-1,3,7,11-tetraene (TMTT) of the C15 (E)-nerolidol to C11-homoterpene (E)-4,8-dimethyl-1,3,7-nonatriene (DMNT); these volatile compounds are produced upon insect herbivore attack and emitted from flowers and vegetative tissues during herbivore feeding. Required during resistance responses to the fungus Alternaria brassicae. Prevents oviposition of the phloem-feeding insect cabbage whitefly (Aleyrodes proletella). The protein is Dimethylnonatriene synthase of Arabidopsis thaliana (Mouse-ear cress).